We begin with the raw amino-acid sequence, 114 residues long: uncharacterized protein (114 aa).

2 consecutive transmembrane segments (helical) span residues 58–78 (CLLG…FFLL) and 94–114 (SISY…FCLA).

The protein resides in the membrane. This is an uncharacterized protein from Saccharomyces cerevisiae (strain ATCC 204508 / S288c) (Baker's yeast).